We begin with the raw amino-acid sequence, 251 residues long: Cell division protein ZapD (251 aa).

Belongs to the ZapD family. As to quaternary structure, interacts with FtsZ.

Its subcellular location is the cytoplasm. In terms of biological role, cell division factor that enhances FtsZ-ring assembly. Directly interacts with FtsZ and promotes bundling of FtsZ protofilaments, with a reduction in FtsZ GTPase activity. The chain is Cell division protein ZapD from Burkholderia vietnamiensis (strain G4 / LMG 22486) (Burkholderia cepacia (strain R1808)).